We begin with the raw amino-acid sequence, 334 residues long: Protein-methionine-sulfoxide reductase catalytic subunit MsrP (334 aa).

The segment at residues 1–44 (MKKNQFLKESDITAESVFFMKRRQVLKALGISAAALSLPHAAHA) is a signal peptide (tat-type signal). Mo-molybdopterin is bound by residues asparagine 88, 91 to 92 (YE), cysteine 146, threonine 181, asparagine 233, arginine 238, and 249 to 251 (GIK).

The protein belongs to the MsrP family. Heterodimer of a catalytic subunit (MsrP) and a heme-binding subunit (MsrQ). Mo-molybdopterin serves as cofactor. In terms of processing, predicted to be exported by the Tat system. The position of the signal peptide cleavage has not been experimentally proven.

The protein resides in the periplasm. The enzyme catalyses L-methionyl-[protein] + a quinone + H2O = L-methionyl-(S)-S-oxide-[protein] + a quinol. The catalysed reaction is L-methionyl-[protein] + a quinone + H2O = L-methionyl-(R)-S-oxide-[protein] + a quinol. Its function is as follows. Part of the MsrPQ system that repairs oxidized periplasmic proteins containing methionine sulfoxide residues (Met-O), using respiratory chain electrons. Thus protects these proteins from oxidative-stress damage caused by reactive species of oxygen and chlorine generated by the host defense mechanisms. MsrPQ is essential for the maintenance of envelope integrity under bleach stress, rescuing a wide series of structurally unrelated periplasmic proteins from methionine oxidation, including the primary periplasmic chaperone SurA and the lipoprotein Pal. The catalytic subunit MsrP is non-stereospecific, being able to reduce both (R-) and (S-) diastereoisomers of methionine sulfoxide. In Shigella dysenteriae serotype 1 (strain Sd197), this protein is Protein-methionine-sulfoxide reductase catalytic subunit MsrP.